A 298-amino-acid chain; its full sequence is 3-hydroxyisobutyrate dehydrogenase (298 aa).

Residues 2 to 30, 65 to 66, and T96 contribute to the NAD(+) site; these read TDIA…VNVF and LP. K171 is a catalytic residue. K246 provides a ligand contact to NAD(+).

This sequence belongs to the HIBADH-related family.

The enzyme catalyses 3-hydroxy-2-methylpropanoate + NAD(+) = 2-methyl-3-oxopropanoate + NADH + H(+). It functions in the pathway amino-acid degradation; L-valine degradation. The chain is 3-hydroxyisobutyrate dehydrogenase from Pseudomonas aeruginosa (strain ATCC 15692 / DSM 22644 / CIP 104116 / JCM 14847 / LMG 12228 / 1C / PRS 101 / PAO1).